Consider the following 66-residue polypeptide: Putative transmembrane protein ORF66 (66 aa).

The Cytoplasmic portion of the chain corresponds to 1–6; that stretch reads MSDVDD. Residues 7-27 traverse the membrane as a helical segment; sequence TIVDSIAIVGAILIGIFLIVV. Residues 28 to 39 lie on the Extracellular side of the membrane; the sequence is SVSNTSLFNNTE. The helical transmembrane segment at 40 to 60 threads the bilayer; sequence YDSMINSVLVIISSVIAYTLG. At 61 to 66 the chain is on the cytoplasmic side; sequence KRRSKS.

It is found in the host membrane. The chain is Putative transmembrane protein ORF66 from Acidianus filamentous virus 2 (isolate Italy/Pozzuoli) (AFV-2).